The sequence spans 34 residues: MSDIN-like toxin proprotein 4 (34 aa).

A propeptide spanning residues 1 to 10 (MSDINATRLP) is cleaved from the precursor. The cyclopeptide (Val-Pro) cross-link spans 11 to 17 (VWIGYSP). The propeptide occupies 18-34 (CVGDDCIALLTRGEGLC).

It belongs to the MSDIN fungal toxin family. Post-translationally, processed by the macrocyclase-peptidase enzyme POPB to yield a toxic cyclic heptapeptide. POPB first removes 10 residues from the N-terminus. Conformational trapping of the remaining peptide forces the enzyme to release this intermediate rather than proceed to macrocyclization. The enzyme rebinds the remaining peptide in a different conformation and catalyzes macrocyclization of the N-terminal 7 residues. Expressed in basidiocarps.

Probable toxin that belongs to the MSDIN-like toxin family responsible for a large number of food poisoning cases and deaths. This is MSDIN-like toxin proprotein 4 from Amanita exitialis (Guangzhou destroying angel).